A 150-amino-acid polypeptide reads, in one-letter code: Large ribosomal subunit protein uL15 (150 aa).

The disordered stretch occupies residues M1–G55. Residues Q8–K32 are compositionally biased toward basic and acidic residues.

The protein belongs to the universal ribosomal protein uL15 family. As to quaternary structure, part of the 50S ribosomal subunit.

Its function is as follows. Binds to the 23S rRNA. This Bifidobacterium longum (strain NCC 2705) protein is Large ribosomal subunit protein uL15.